A 701-amino-acid polypeptide reads, in one-letter code: DNA ligase (701 aa).

Residues 43–47 (DADYD), 92–93 (SL), and Glu-126 each bind NAD(+). The N6-AMP-lysine intermediate role is filled by Lys-128. The NAD(+) site is built by Arg-149, Glu-186, Lys-302, and Lys-326. Cys-417, Cys-420, Cys-440, and Cys-446 together coordinate Zn(2+). The BRCT domain occupies 622–701 (ETGSPVTGKT…DEWLALIGET (80 aa)).

Belongs to the NAD-dependent DNA ligase family. LigA subfamily. Mg(2+) serves as cofactor. Requires Mn(2+) as cofactor.

The enzyme catalyses NAD(+) + (deoxyribonucleotide)n-3'-hydroxyl + 5'-phospho-(deoxyribonucleotide)m = (deoxyribonucleotide)n+m + AMP + beta-nicotinamide D-nucleotide.. DNA ligase that catalyzes the formation of phosphodiester linkages between 5'-phosphoryl and 3'-hydroxyl groups in double-stranded DNA using NAD as a coenzyme and as the energy source for the reaction. It is essential for DNA replication and repair of damaged DNA. This is DNA ligase from Hyphomonas neptunium (strain ATCC 15444).